The chain runs to 486 residues: Protein nucleotidyltransferase YdiU (486 aa).

ATP-binding residues include Gly90, Gly92, Arg93, Lys113, Asp125, Gly126, Arg176, and Arg183. Catalysis depends on Asp252, which acts as the Proton acceptor. 2 residues coordinate Mg(2+): Asn253 and Asp262. Asp262 contacts ATP.

The protein belongs to the SELO family. Requires Mg(2+) as cofactor. Mn(2+) serves as cofactor.

The enzyme catalyses L-seryl-[protein] + ATP = 3-O-(5'-adenylyl)-L-seryl-[protein] + diphosphate. It carries out the reaction L-threonyl-[protein] + ATP = 3-O-(5'-adenylyl)-L-threonyl-[protein] + diphosphate. It catalyses the reaction L-tyrosyl-[protein] + ATP = O-(5'-adenylyl)-L-tyrosyl-[protein] + diphosphate. The catalysed reaction is L-histidyl-[protein] + UTP = N(tele)-(5'-uridylyl)-L-histidyl-[protein] + diphosphate. The enzyme catalyses L-seryl-[protein] + UTP = O-(5'-uridylyl)-L-seryl-[protein] + diphosphate. It carries out the reaction L-tyrosyl-[protein] + UTP = O-(5'-uridylyl)-L-tyrosyl-[protein] + diphosphate. Its function is as follows. Nucleotidyltransferase involved in the post-translational modification of proteins. It can catalyze the addition of adenosine monophosphate (AMP) or uridine monophosphate (UMP) to a protein, resulting in modifications known as AMPylation and UMPylation. The polypeptide is Protein nucleotidyltransferase YdiU (Pseudomonas putida (strain W619)).